The chain runs to 84 residues: uncharacterized protein (84 aa).

A run of 3 helical transmembrane segments spans residues 8–28 (IYFFTIACIIAVIYCVLVNLL), 30–50 (INVIPVVLAFSLILILTISTI), and 63–83 (VLFMLLVLAFFAYAIYKLYIP).

The protein localises to the cell membrane. This is an uncharacterized protein from Methanocaldococcus jannaschii (strain ATCC 43067 / DSM 2661 / JAL-1 / JCM 10045 / NBRC 100440) (Methanococcus jannaschii).